We begin with the raw amino-acid sequence, 185 residues long: Large ribosomal subunit protein uL5 (185 aa).

The protein belongs to the universal ribosomal protein uL5 family. Part of the 50S ribosomal subunit; part of the 5S rRNA/L5/L18/L25 subcomplex. Contacts the 5S rRNA and the P site tRNA. Forms a bridge to the 30S subunit in the 70S ribosome.

Functionally, this is one of the proteins that bind and probably mediate the attachment of the 5S RNA into the large ribosomal subunit, where it forms part of the central protuberance. In the 70S ribosome it contacts protein S13 of the 30S subunit (bridge B1b), connecting the 2 subunits; this bridge is implicated in subunit movement. Contacts the P site tRNA; the 5S rRNA and some of its associated proteins might help stabilize positioning of ribosome-bound tRNAs. This Bradyrhizobium diazoefficiens (strain JCM 10833 / BCRC 13528 / IAM 13628 / NBRC 14792 / USDA 110) protein is Large ribosomal subunit protein uL5.